We begin with the raw amino-acid sequence, 532 residues long: Maternal protein exuperantia (532 aa).

2 disordered regions span residues 206-251 (CSAS…NAVQ) and 403-491 (TVKP…NGLK). Low complexity-rich tracts occupy residues 220-231 (GSSMVSDSVSIS) and 404-417 (VKPV…NNNN). Over residues 454 to 467 (SVSSLPDSTTKTPS) the composition is skewed to polar residues. S467 is subject to Phosphoserine.

In terms of assembly, component of the osk RNP complex, which is composed of at least exuperantia (exu), ypsilon schachtel (yps), aret (bruno), cup, and the mRNA of osk. In the sponge body, forms a ribonucleoprotein complex (RNP) containing at least me31B, exu, yps and the mRNA of osk; interactions with exu and yps are RNA dependent.

Its subcellular location is the cytoplasm. The protein resides in the cytoplasmic ribonucleoprotein granule. Ensures the proper localization of the mRNA of the bicoid gene to the anterior regions of the oocyte thus playing a fundamental role in the establishment of the polarity of the oocyte. May bind the bcd mRNA. The polypeptide is Maternal protein exuperantia (exu) (Drosophila melanogaster (Fruit fly)).